Here is a 215-residue protein sequence, read N- to C-terminus: Large ribosomal subunit protein uL3 (215 aa).

Residues 136-155 (GVSISHRSHGSTGQRQDPGK) are disordered. An N5-methylglutamine modification is found at Q151.

It belongs to the universal ribosomal protein uL3 family. As to quaternary structure, part of the 50S ribosomal subunit. Forms a cluster with proteins L14 and L19. In terms of processing, methylated by PrmB.

Its function is as follows. One of the primary rRNA binding proteins, it binds directly near the 3'-end of the 23S rRNA, where it nucleates assembly of the 50S subunit. This is Large ribosomal subunit protein uL3 from Rickettsia rickettsii (strain Iowa).